The sequence spans 297 residues: 4-diphosphocytidyl-2-C-methyl-D-erythritol kinase (297 aa).

Residue Lys-19 is part of the active site. ATP is bound at residue 105 to 115 (PIASGIGGGSA). The active site involves Asp-147.

This sequence belongs to the GHMP kinase family. IspE subfamily.

It catalyses the reaction 4-CDP-2-C-methyl-D-erythritol + ATP = 4-CDP-2-C-methyl-D-erythritol 2-phosphate + ADP + H(+). It participates in isoprenoid biosynthesis; isopentenyl diphosphate biosynthesis via DXP pathway; isopentenyl diphosphate from 1-deoxy-D-xylulose 5-phosphate: step 3/6. In terms of biological role, catalyzes the phosphorylation of the position 2 hydroxy group of 4-diphosphocytidyl-2C-methyl-D-erythritol. This Rhizobium etli (strain CIAT 652) protein is 4-diphosphocytidyl-2-C-methyl-D-erythritol kinase.